Consider the following 285-residue polypeptide: Inositol oxygenase (285 aa).

Substrate is bound at residue R29. At S33 the chain carries Phosphoserine. A substrate-binding site is contributed by 85-87 (DES). The Fe cation site is built by H98, H123, and D124. Residues K127 and 141 to 142 (GD) each bind substrate. H194, H220, and D253 together coordinate Fe cation. Residue 220–221 (HS) coordinates substrate.

It belongs to the myo-inositol oxygenase family. The cofactor is Fe cation. As to expression, kidney specific.

It localises to the cytoplasm. It catalyses the reaction myo-inositol + O2 = D-glucuronate + H2O + H(+). The protein operates within polyol metabolism; myo-inositol degradation into D-glucuronate; D-glucuronate from myo-inositol: step 1/1. The polypeptide is Inositol oxygenase (MIOX) (Homo sapiens (Human)).